The following is a 149-amino-acid chain: MQVILLDKVANLGSLGDQVNVKAGYARNFLVPQGKAVPATKKNIEFFEARRAELEAKLAEVLAAANARAEKIDALETVTIASKAGDEGKLFGSIGTRDIADAVTAAGVEVAKSEVRLPNGVLRTTGEHEVSFQVHSEVFAKVIVNVVAE.

Lys-89 carries the N6-acetyllysine modification.

Belongs to the bacterial ribosomal protein bL9 family.

Binds to the 23S rRNA. This Shigella dysenteriae serotype 1 (strain Sd197) protein is Large ribosomal subunit protein bL9.